We begin with the raw amino-acid sequence, 153 residues long: Putative pre-16S rRNA nuclease (153 aa).

This sequence belongs to the YqgF nuclease family.

It localises to the cytoplasm. Could be a nuclease involved in processing of the 5'-end of pre-16S rRNA. This Koribacter versatilis (strain Ellin345) protein is Putative pre-16S rRNA nuclease.